We begin with the raw amino-acid sequence, 288 residues long: Polyprenyl transferase eriF (288 aa).

Helical transmembrane passes span 24–44 (ASII…TLPL), 51–71 (YIFL…LNQV), 101–121 (IAAF…LPET), 145–165 (CIAM…AISP), 215–235 (FIIT…GGIF), and 268–288 (FYTY…HGLI).

It belongs to the UbiA prenyltransferase family. Requires Mg(2+) as cofactor.

The protein localises to the membrane. Its function is as follows. Polyprenyl transferase; part of the gene cluster that mediates the biosynthesis of erinacines, cyathane-xylosides that show unique biological activities, including leishmanicidal activity, stimulating activity for nerve growth-factor synthesis, and agonistic activity toward the kappa opioid receptor. The role of eriF within the pathway has still to be determined. The first step of the erinacines biosynthesis pathway is catalyzed by the geranylgeranyl diphosphate (GGPP) synthase eriE via conversion of farnesyl pyrophosphate and isopentyl pyrophosphate into geranylgeranyl pyrophosphate (GGPP). GGPP is then substrate of the diterpene cyclase eriG for the production of cyatha-3,12-diene. The cytochrome P450 monooxygenase eriI then hydroxylates cyatha-3,12-diene at C-14 of the seven-membered ring to produce erinacol, which is further hydroxylated at C-15 by the cytochrome P450 monooxygenase eriC to yield cyathadiol. The cytochrome P450 monooxygenase eriA then catalyzes C-11 hydroxylation in the presence of the short chain dehydrogenase/reductase (SDR) eriH, which leads to the production of cyathatriol. The acetyltransferase eriL converts cyathatriol into 11-O-acetyl-cyathatriol. The SDR eriH catalyzes further oxidation of 11-O-acetyl-cyathatriol into 1-O-acetylcyathin A3. Finally, the glycosyl transferase eriJ tranfers xylose from UDP-xylose onto C-14 of 11-O-acetyl-cyathatriol to form eracine Q. EriJ is also able to convert 11-O-acetyl-cyathatriol to eracine Q2 by using UDP-D-glucose as cosubstrate, but at a lower rate. The protein is Polyprenyl transferase eriF of Hericium erinaceus (Lion's mane mushroom).